We begin with the raw amino-acid sequence, 329 residues long: 4-hydroxythreonine-4-phosphate dehydrogenase (329 aa).

His137 and Thr138 together coordinate substrate. The a divalent metal cation site is built by His167, His212, and His267. Positions 275, 284, and 293 each coordinate substrate.

Belongs to the PdxA family. In terms of assembly, homodimer. It depends on Zn(2+) as a cofactor. Requires Mg(2+) as cofactor. Co(2+) serves as cofactor.

Its subcellular location is the cytoplasm. The enzyme catalyses 4-(phosphooxy)-L-threonine + NAD(+) = 3-amino-2-oxopropyl phosphate + CO2 + NADH. It participates in cofactor biosynthesis; pyridoxine 5'-phosphate biosynthesis; pyridoxine 5'-phosphate from D-erythrose 4-phosphate: step 4/5. Functionally, catalyzes the NAD(P)-dependent oxidation of 4-(phosphooxy)-L-threonine (HTP) into 2-amino-3-oxo-4-(phosphooxy)butyric acid which spontaneously decarboxylates to form 3-amino-2-oxopropyl phosphate (AHAP). The chain is 4-hydroxythreonine-4-phosphate dehydrogenase from Stutzerimonas stutzeri (strain A1501) (Pseudomonas stutzeri).